Consider the following 886-residue polypeptide: DNA repair and recombination protein RAD54B (886 aa).

Polar residues predominate over residues 1–12; sequence MRRSAAPSQVQG. Residues 1–95 form a disordered region; sequence MRRSAAPSQV…ASKEITESKA (95 aa). S14 is modified (phosphoserine). Polar residues predominate over residues 47–62; it reads AEQSQNDPGVCSSNPC. Composition is skewed to basic and acidic residues over residues 67-76 and 86-95; these read IPREVGDGTR and ASKEITESKA. The 168-residue stretch at 291 to 458 folds into the Helicase ATP-binding domain; it reads GMRAVGKCGA…FALVDFVNPG (168 aa). 304-311 serves as a coordination point for ATP; the sequence is DEMGLGKT. Positions 409–412 match the DEGH box motif; it reads DEGH. Residues 627–788 form the Helicase C-terminal domain; it reads KLLAVIHELR…HIQFSVEELK (162 aa).

This sequence belongs to the SNF2/RAD54 helicase family. As to quaternary structure, interacts with RAD51 through the NH2-terminal domain.

The protein resides in the nucleus. Involved in DNA repair and mitotic recombination. May play an active role in recombination processes in concert with other members of the RAD52 epistasis group. The chain is DNA repair and recombination protein RAD54B (Rad54b) from Mus musculus (Mouse).